The chain runs to 463 residues: tRNA-2-methylthio-N(6)-dimethylallyladenosine synthase (463 aa).

The 117-residue stretch at Gly19–Ser135 folds into the MTTase N-terminal domain. Positions 28, 64, 98, 170, 174, and 177 each coordinate [4Fe-4S] cluster. Residues Arg156–Glu393 form the Radical SAM core domain. The 68-residue stretch at Gln396–Leu463 folds into the TRAM domain.

It belongs to the methylthiotransferase family. MiaB subfamily. As to quaternary structure, monomer. The cofactor is [4Fe-4S] cluster.

The protein localises to the cytoplasm. The enzyme catalyses N(6)-dimethylallyladenosine(37) in tRNA + (sulfur carrier)-SH + AH2 + 2 S-adenosyl-L-methionine = 2-methylsulfanyl-N(6)-dimethylallyladenosine(37) in tRNA + (sulfur carrier)-H + 5'-deoxyadenosine + L-methionine + A + S-adenosyl-L-homocysteine + 2 H(+). Its function is as follows. Catalyzes the methylthiolation of N6-(dimethylallyl)adenosine (i(6)A), leading to the formation of 2-methylthio-N6-(dimethylallyl)adenosine (ms(2)i(6)A) at position 37 in tRNAs that read codons beginning with uridine. The polypeptide is tRNA-2-methylthio-N(6)-dimethylallyladenosine synthase (Prochlorococcus marinus (strain NATL2A)).